The chain runs to 231 residues: ATP phosphoribosyltransferase (231 aa).

It belongs to the ATP phosphoribosyltransferase family. Short subfamily. As to quaternary structure, heteromultimer composed of HisG and HisZ subunits.

It localises to the cytoplasm. The catalysed reaction is 1-(5-phospho-beta-D-ribosyl)-ATP + diphosphate = 5-phospho-alpha-D-ribose 1-diphosphate + ATP. It participates in amino-acid biosynthesis; L-histidine biosynthesis; L-histidine from 5-phospho-alpha-D-ribose 1-diphosphate: step 1/9. Its function is as follows. Catalyzes the condensation of ATP and 5-phosphoribose 1-diphosphate to form N'-(5'-phosphoribosyl)-ATP (PR-ATP). Has a crucial role in the pathway because the rate of histidine biosynthesis seems to be controlled primarily by regulation of HisG enzymatic activity. This chain is ATP phosphoribosyltransferase, found in Brucella melitensis biotype 2 (strain ATCC 23457).